The following is a 240-amino-acid chain: Orotidine 5'-phosphate decarboxylase (240 aa).

Residues aspartate 16, lysine 37, 64 to 73, threonine 128, arginine 190, glutamine 199, glycine 219, and arginine 220 contribute to the substrate site; that span reads DLKFHDIPTT. The Proton donor role is filled by lysine 66.

It belongs to the OMP decarboxylase family. Type 1 subfamily. In terms of assembly, homodimer.

It catalyses the reaction orotidine 5'-phosphate + H(+) = UMP + CO2. It functions in the pathway pyrimidine metabolism; UMP biosynthesis via de novo pathway; UMP from orotate: step 2/2. In terms of biological role, catalyzes the decarboxylation of orotidine 5'-monophosphate (OMP) to uridine 5'-monophosphate (UMP). The chain is Orotidine 5'-phosphate decarboxylase from Prochlorococcus marinus (strain SARG / CCMP1375 / SS120).